A 309-amino-acid polypeptide reads, in one-letter code: Phosphoserine phosphatase (309 aa).

The active-site Nucleophile is the Asp97. Residues Asp97 and Asp99 each contribute to the Mg(2+) site. The active-site Proton donor is Asp99. Residues Glu106, Arg142, 186 to 187 (SG), and Lys232 contribute to the substrate site. Asp255 contributes to the Mg(2+) binding site. Asn258 provides a ligand contact to substrate.

It belongs to the HAD-like hydrolase superfamily. SerB family. Mg(2+) is required as a cofactor.

It carries out the reaction O-phospho-L-serine + H2O = L-serine + phosphate. The enzyme catalyses O-phospho-D-serine + H2O = D-serine + phosphate. Its pathway is amino-acid biosynthesis; L-serine biosynthesis; L-serine from 3-phospho-D-glycerate: step 3/3. The chain is Phosphoserine phosphatase (SER2) from Saccharomyces cerevisiae (strain ATCC 204508 / S288c) (Baker's yeast).